We begin with the raw amino-acid sequence, 242 residues long: Biosynthetic peptidoglycan transglycosylase (242 aa).

The helical transmembrane segment at 19–39 (ILAALAVFWGGGIALFSVVPV) threads the bilayer.

Belongs to the glycosyltransferase 51 family.

It is found in the cell inner membrane. The catalysed reaction is [GlcNAc-(1-&gt;4)-Mur2Ac(oyl-L-Ala-gamma-D-Glu-L-Lys-D-Ala-D-Ala)](n)-di-trans,octa-cis-undecaprenyl diphosphate + beta-D-GlcNAc-(1-&gt;4)-Mur2Ac(oyl-L-Ala-gamma-D-Glu-L-Lys-D-Ala-D-Ala)-di-trans,octa-cis-undecaprenyl diphosphate = [GlcNAc-(1-&gt;4)-Mur2Ac(oyl-L-Ala-gamma-D-Glu-L-Lys-D-Ala-D-Ala)](n+1)-di-trans,octa-cis-undecaprenyl diphosphate + di-trans,octa-cis-undecaprenyl diphosphate + H(+). The protein operates within cell wall biogenesis; peptidoglycan biosynthesis. Functionally, peptidoglycan polymerase that catalyzes glycan chain elongation from lipid-linked precursors. This chain is Biosynthetic peptidoglycan transglycosylase, found in Salmonella schwarzengrund (strain CVM19633).